The primary structure comprises 1126 residues: [F-actin]-monooxygenase mical2 (1126 aa).

A monooxygenase domain region spans residues 2-494 (GENGDDKHGR…KHLFITNELQ (493 aa)). Residues Cys-97, 116–118 (EKR), 123–125 (RNN), Phe-183, Tyr-299, and Asp-399 contribute to the FAD site. Residues 516-619 (DVRPNKLLIW…MVLYLSKFYE (104 aa)) enclose the Calponin-homology (CH) domain. The Nuclear localization signal motif lies at 659–680 (RKRVPKDEKTSDDSDLNKRRKT). 2 disordered regions span residues 748-830 (AVTA…SLSS) and 892-935 (PSLG…SGMS). Over residues 792–803 (VRPPVQPRPGPA) the composition is skewed to pro residues. A compositionally biased stretch (basic and acidic residues) spans 805-824 (PTRELRVVERAQSHPDDLGR). Residues 918–932 (SSSDSSPSSAPSRKS) are compositionally biased toward low complexity. Positions 1001 to 1063 (DTCYFCKRRV…QPHFMHSVTK (63 aa)) constitute an LIM zinc-binding domain. The Zn(2+) site is built by Cys-1003, Cys-1006, His-1024, Cys-1027, Cys-1030, Cys-1033, Cys-1053, and His-1056.

This sequence belongs to the Mical family. The cofactor is FAD.

It is found in the nucleus. It localises to the cytoplasm. It carries out the reaction L-methionyl-[F-actin] + NADPH + O2 + H(+) = L-methionyl-(R)-S-oxide-[F-actin] + NADP(+) + H2O. Its function is as follows. Nuclear monooxygenase that promotes depolymerization of F-actin by mediating oxidation of specific methionine residues on actin and regulates the srf signaling. Acts by modifying nuclear actin subunits through the addition of oxygen to form methionine-sulfoxide, leading to promote actin filament severing and prevent repolymerization. Acts as a key regulator of the srf signaling pathway elicited by nerve growth factor and serum: mediates oxidation and subsequent depolymerization of nuclear actin, leading to increase mkl1/mrtf-a presence in the nucleus and promote srf:mkl1/mrtf-a-dependent gene transcription. This chain is [F-actin]-monooxygenase mical2, found in Xenopus tropicalis (Western clawed frog).